We begin with the raw amino-acid sequence, 279 residues long: Dehydrogenase/reductase SDR family member 4 (279 aa).

37–61 lines the NADP(+) pocket; the sequence is LVTASTDGIGFAIARRLAQDGAHVV. Lys93 is modified (N6-acetyllysine; alternate). Position 93 is an N6-succinyllysine; alternate (Lys93). Lys106 carries the post-translational modification N6-acetyllysine. Ser170 contributes to the substrate binding site. Tyr183 functions as the Proton acceptor in the catalytic mechanism. Lys187 contributes to the NADP(+) binding site. Ser221 carries the post-translational modification Phosphoserine. Lys235 is subject to N6-succinyllysine. The Peroxisomal targeting signal motif lies at 277-279; sequence SHL.

It belongs to the short-chain dehydrogenases/reductases (SDR) family. Homotetramer.

The protein localises to the peroxisome. The enzyme catalyses a secondary alcohol + NADP(+) = a ketone + NADPH + H(+). It catalyses the reaction 3alpha-hydroxy-5beta-pregnan-20-one + NADP(+) = 5beta-pregnan-3,20-dione + NADPH + H(+). The catalysed reaction is 5beta-dihydrotestosterone + NADPH + H(+) = 5beta-androstane-3alpha,17beta-diol + NADP(+). It carries out the reaction all-trans-retinol + NADP(+) = all-trans-retinal + NADPH + H(+). The enzyme catalyses isatin + NADPH + H(+) = 3-hydroxyindolin-2-one + NADP(+). Functionally, NADPH-dependent oxidoreductase which catalyzes the reduction of a variety of compounds bearing carbonyl groups including ketosteroids, alpha-dicarbonyl compounds, aldehydes, aromatic ketones and quinones. Reduces all-trans-retinal and 9-cis retinal. Reduces 3-ketosteroids and benzil into 3alpha-hydroxysteroids and S-benzoin, respectively, in contrast to the stereoselectivity of primates DHRS4s which produce 3beta-hydroxysteroids and R-benzoin. In the reverse reaction, catalyzes the NADP-dependent oxidation of 3alpha-hydroxysteroids and alcohol, but with much lower efficiency. Involved in the metabolism of 3alpha-hydroxysteroids, retinoid, isatin and xenobiotic carbonyl compounds. The polypeptide is Dehydrogenase/reductase SDR family member 4 (DHRS4) (Bos taurus (Bovine)).